A 274-amino-acid chain; its full sequence is MQQLQTVIENAFERRAEITPANTDSITREAVSQVIALLDSGALRVAEKINGEWVTHQWLKKAVLLSFRINDNRLMEGAETRFYDKVPMKFADYDEARFQREGFRVVPPASVRQGAFIARNTVLMPSYVNIGAYVDEGTMVDTWATVGSCAQIGKNVHLSGGVGIGGVLEPLQANPTIIEDNCFIGARSEVVEGVIVEEGSVISMGVFIGQSTKIYDRETGEVHYGRVPAGSVVVSGNLPSKRGDYSLYCAVIVKKVDAKTLGKVGINELLRTID.

Positions 104 and 141 each coordinate substrate.

It belongs to the transferase hexapeptide repeat family. In terms of assembly, homotrimer.

Its subcellular location is the cytoplasm. The catalysed reaction is (S)-2,3,4,5-tetrahydrodipicolinate + succinyl-CoA + H2O = (S)-2-succinylamino-6-oxoheptanedioate + CoA. It functions in the pathway amino-acid biosynthesis; L-lysine biosynthesis via DAP pathway; LL-2,6-diaminopimelate from (S)-tetrahydrodipicolinate (succinylase route): step 1/3. The protein is 2,3,4,5-tetrahydropyridine-2,6-dicarboxylate N-succinyltransferase of Edwardsiella ictaluri (strain 93-146).